Consider the following 405-residue polypeptide: Probable tRNA sulfurtransferase (405 aa).

Residues 60-165 (AEVDKRLKKV…QDAVYISNQL (106 aa)) enclose the THUMP domain. ATP is bound by residues 183–184 (ML), 208–209 (HF), Arg265, Gly287, and Gln296.

The protein belongs to the ThiI family.

The protein localises to the cytoplasm. The enzyme catalyses [ThiI sulfur-carrier protein]-S-sulfanyl-L-cysteine + a uridine in tRNA + 2 reduced [2Fe-2S]-[ferredoxin] + ATP + H(+) = [ThiI sulfur-carrier protein]-L-cysteine + a 4-thiouridine in tRNA + 2 oxidized [2Fe-2S]-[ferredoxin] + AMP + diphosphate. It catalyses the reaction [ThiS sulfur-carrier protein]-C-terminal Gly-Gly-AMP + S-sulfanyl-L-cysteinyl-[cysteine desulfurase] + AH2 = [ThiS sulfur-carrier protein]-C-terminal-Gly-aminoethanethioate + L-cysteinyl-[cysteine desulfurase] + A + AMP + 2 H(+). Its pathway is cofactor biosynthesis; thiamine diphosphate biosynthesis. Its function is as follows. Catalyzes the ATP-dependent transfer of a sulfur to tRNA to produce 4-thiouridine in position 8 of tRNAs, which functions as a near-UV photosensor. Also catalyzes the transfer of sulfur to the sulfur carrier protein ThiS, forming ThiS-thiocarboxylate. This is a step in the synthesis of thiazole, in the thiamine biosynthesis pathway. The sulfur is donated as persulfide by IscS. The sequence is that of Probable tRNA sulfurtransferase from Lactobacillus helveticus (strain DPC 4571).